The primary structure comprises 415 residues: L-cysteine:1D-myo-inositol 2-amino-2-deoxy-alpha-D-glucopyranoside ligase (415 aa).

Cys-43 is a Zn(2+) binding site. L-cysteinyl-5'-AMP-binding positions include 43 to 46, Thr-58, and 81 to 83; these read CGIT and NIT. Residues 45-55 carry the 'HIGH' region motif; sequence ITPYDATHLGH. The 'ERGGDP' region motif lies at 187-192; the sequence is ERGGDP. Trp-227 contacts L-cysteinyl-5'-AMP. Residue Cys-231 participates in Zn(2+) binding. 249–251 lines the L-cysteinyl-5'-AMP pocket; sequence GSD. His-256 lines the Zn(2+) pocket. Ile-283 is an L-cysteinyl-5'-AMP binding site. The 'KMSKS' region signature appears at 289-293; it reads KMSKS.

Belongs to the class-I aminoacyl-tRNA synthetase family. MshC subfamily. As to quaternary structure, monomer. Requires Zn(2+) as cofactor.

The catalysed reaction is 1D-myo-inositol 2-amino-2-deoxy-alpha-D-glucopyranoside + L-cysteine + ATP = 1D-myo-inositol 2-(L-cysteinylamino)-2-deoxy-alpha-D-glucopyranoside + AMP + diphosphate + H(+). Its function is as follows. Catalyzes the ATP-dependent condensation of GlcN-Ins and L-cysteine to form L-Cys-GlcN-Ins. The chain is L-cysteine:1D-myo-inositol 2-amino-2-deoxy-alpha-D-glucopyranoside ligase from Mycobacterium sp. (strain JLS).